Reading from the N-terminus, the 71-residue chain is Large ribosomal subunit protein bL32c (71 aa).

The tract at residues 1–24 is disordered; the sequence is MAVPKKRTSRSKKKIRKNVRKGKK.

This sequence belongs to the bacterial ribosomal protein bL32 family.

It localises to the plastid. The protein localises to the chloroplast. This is Large ribosomal subunit protein bL32c from Pinus koraiensis (Korean pine).